The sequence spans 181 residues: NAD(P)H-quinone oxidoreductase subunit I, chloroplastic (181 aa).

4Fe-4S ferredoxin-type domains follow at residues 52 to 81 (GRIH…VDWE) and 92 to 121 (KSYS…MTEE). [4Fe-4S] cluster contacts are provided by Cys61, Cys64, Cys67, Cys71, Cys101, Cys104, Cys107, and Cys111.

This sequence belongs to the complex I 23 kDa subunit family. NDH is composed of at least 16 different subunits, 5 of which are encoded in the nucleus. The cofactor is [4Fe-4S] cluster.

It is found in the plastid. It localises to the chloroplast thylakoid membrane. The catalysed reaction is a plastoquinone + NADH + (n+1) H(+)(in) = a plastoquinol + NAD(+) + n H(+)(out). It catalyses the reaction a plastoquinone + NADPH + (n+1) H(+)(in) = a plastoquinol + NADP(+) + n H(+)(out). NDH shuttles electrons from NAD(P)H:plastoquinone, via FMN and iron-sulfur (Fe-S) centers, to quinones in the photosynthetic chain and possibly in a chloroplast respiratory chain. The immediate electron acceptor for the enzyme in this species is believed to be plastoquinone. Couples the redox reaction to proton translocation, and thus conserves the redox energy in a proton gradient. The sequence is that of NAD(P)H-quinone oxidoreductase subunit I, chloroplastic from Zygnema circumcarinatum (Green alga).